Reading from the N-terminus, the 1564-residue chain is NACHT domain- and WD repeat-containing protein 1 (1564 aa).

Residues threonine 335 to valine 661 form the NACHT domain. An ATP-binding site is contributed by glycine 341 to threonine 348. 14 WD repeats span residues glycine 866–methionine 905, glycine 908–threonine 947, proline 956–histidine 994, aspartate 998–lysine 1037, lysine 1044–lysine 1082, leucine 1083–methionine 1121, glutamate 1126–aspartate 1165, leucine 1167–valine 1207, leucine 1212–serine 1251, aspartate 1253–valine 1290, isoleucine 1291–isoleucine 1327, glycine 1338–cysteine 1376, lysine 1380–glutamine 1418, and glutamate 1425–valine 1462.

As to quaternary structure, may interact with HSP90AA1, HSP90AB1 and BAG2. In terms of tissue distribution, expressed at highest levels in prostate, followed by testis, retina, trachea and optic nerve. Also detected in brain, epididymis, lung, vagina and pituitary. In the prostate, tends to be up-regulated during malignant progression compared to normal epithelium (at protein level).

It localises to the cytoplasm. Its subcellular location is the cytosol. Its function is as follows. May play a role in the control of androgen receptor (AR) protein steady-state levels. This is NACHT domain- and WD repeat-containing protein 1 (NWD1) from Homo sapiens (Human).